The primary structure comprises 156 residues: UPF0460 protein in nifX 3'region (156 aa).

This sequence belongs to the UPF0460 family.

In Rhodobacter capsulatus (Rhodopseudomonas capsulata), this protein is UPF0460 protein in nifX 3'region.